The following is a 589-amino-acid chain: Capsid scaffolding protein (589 aa).

Active-site charge relay system residues include His-47, Ser-118, and His-142. The span at 264 to 273 shows a compositional bias: basic and acidic residues; sequence EKERPKEPEQ. Residues 264–283 are disordered; the sequence is EKERPKEPEQSHVPTESMSH. Residues 307-326 form an interaction with pAP region; it reads HDGVYLPKDAFFSLIGASRP. 2 disordered regions span residues 421 to 478 and 514 to 552; these read RSRS…GDRY and ASPT…AERG. 2 short sequence motifs (nuclear localization signal) span residues 428 to 433 and 453 to 459; these read KRRRER and KARKRLK. Over residues 453–462 the composition is skewed to basic residues; sequence KARKRLKAHH. Residues 514–543 show a composition bias toward low complexity; sequence ASPTTTTSHQAEASEPQASTAAAAPSTASS. The tract at residues 569-589 is interaction with major capsid protein; it reads PPKDMVDLNRRLFVAALNKME.

It belongs to the herpesviridae capsid scaffolding protein family. In terms of assembly, homomultimer. Interacts with major capsid protein. Exists in a monomer-dimer equilibrium with the dimer being the active species. In terms of processing, capsid scaffolding protein is cleaved by assemblin after formation of the spherical procapsid. As a result, the capsid obtains its mature, icosahedral shape. Cleavages occur at two or more sites: release (R-site) and maturation (M-site).

It localises to the host cytoplasm. The protein localises to the host nucleus. It carries out the reaction Cleaves -Ala-|-Ser- and -Ala-|-Ala- bonds in the scaffold protein.. In terms of biological role, acts as a scaffold protein by binding major capsid protein in the cytoplasm, inducing the nuclear localization of both proteins. Multimerizes in the nucleus such as major capsid protein forms the icosahedral T=16 capsid. Autocatalytic cleavage releases the assembly protein, and subsequently abolishes interaction with major capsid protein. Cleavages products are evicted from the capsid before or during DNA packaging. Protease that plays an essential role in virion assembly within the nucleus. Catalyzes the cleavage of the assembly protein after formation of the spherical procapsid. By that cleavage, the capsid matures and gains its icosahedral shape. The cleavage sites seem to include -Ala-Ser-, -Ala-Ala-, as well as Ala-Thr bonds. Assemblin and cleavages products are evicted from the capsid before or during DNA packaging. Functionally, plays a major role in capsid assembly. Acts as a scaffold protein by binding major capsid protein. Multimerizes in the nucleus such as major capsid protein forms the icosahedral T=16 capsid. Cleaved by assemblin after capsid completion. The cleavages products are evicted from the capsid before or during DNA packaging. This is Capsid scaffolding protein (UL80) from Simian cytomegalovirus (strain Colburn).